The sequence spans 337 residues: 1,4-dihydroxy-2-naphthoyl-CoA synthase, peroxisomal (337 aa).

Substrate is bound by residues 97–98 (RR), Lys133, 137–141 (SGGDQ), 181–185 (YAVGG), Thr207, and Ser213. 206 to 208 (QTG) is a hydrogencarbonate binding site.

It belongs to the enoyl-CoA hydratase/isomerase family. MenB subfamily. Homohexamer. Requires hydrogencarbonate as cofactor.

Its subcellular location is the peroxisome. The enzyme catalyses 2-succinylbenzoyl-CoA + H(+) = 1,4-dihydroxy-2-naphthoyl-CoA + H2O. In terms of biological role, involved in the biosynthesis of phylloquinone (vitamin K1). Converts o-succinylbenzoyl-CoA (OSB-CoA) to 1,4-dihydroxy-2-naphthoyl-CoA (DHNA-CoA). The polypeptide is 1,4-dihydroxy-2-naphthoyl-CoA synthase, peroxisomal (MENB) (Arabidopsis thaliana (Mouse-ear cress)).